A 493-amino-acid polypeptide reads, in one-letter code: Cobyric acid synthase (493 aa).

The GATase cobBQ-type domain maps to 246–440 (PIDIAVIKMP…IHGVFDGVVF (195 aa)). The active-site Nucleophile is C326. H432 is an active-site residue.

Belongs to the CobB/CobQ family. CobQ subfamily.

The protein operates within cofactor biosynthesis; adenosylcobalamin biosynthesis. Functionally, catalyzes amidations at positions B, D, E, and G on adenosylcobyrinic A,C-diamide. NH(2) groups are provided by glutamine, and one molecule of ATP is hydrogenolyzed for each amidation. The sequence is that of Cobyric acid synthase from Clostridium botulinum (strain Kyoto / Type A2).